Consider the following 366-residue polypeptide: S-adenosylmethionine:tRNA ribosyltransferase-isomerase (366 aa).

This sequence belongs to the QueA family. As to quaternary structure, monomer.

The protein localises to the cytoplasm. The enzyme catalyses 7-aminomethyl-7-carbaguanosine(34) in tRNA + S-adenosyl-L-methionine = epoxyqueuosine(34) in tRNA + adenine + L-methionine + 2 H(+). It participates in tRNA modification; tRNA-queuosine biosynthesis. Its function is as follows. Transfers and isomerizes the ribose moiety from AdoMet to the 7-aminomethyl group of 7-deazaguanine (preQ1-tRNA) to give epoxyqueuosine (oQ-tRNA). This is S-adenosylmethionine:tRNA ribosyltransferase-isomerase from Synechococcus sp. (strain CC9605).